Here is a 959-residue protein sequence, read N- to C-terminus: Protovillin (959 aa).

The interval Met-1 to Ile-53 is tail. Residues Gly-54–Thr-832 form a core region. Gelsolin-like repeat units follow at residues Ser-64–Thr-116, Ile-204–Gly-244, Ile-309–Thr-366, Arg-479–Gly-529, Ile-603–Ala-647, and Phe-713–Leu-754. Repeat copies occupy residues Thr-840 to Val-849 and Thr-851 to Val-860. The tract at residues Thr-840 to Val-860 is 2 X 10 AA repeats of T-P-K-P-I-T-T-P-T-V. One can recognise an HP domain in the interval Thr-895–Phe-959.

It belongs to the villin/gelsolin family.

The protein localises to the cytoplasm. Its subcellular location is the cytoskeleton. Caps actin filaments but displays neither severing nor cross-linking nor nucleating activities. Protovillin seems to be a villin precursor with only archaic capping activity. It lacks essential changes in the sequence to allow bundling of actin filaments and consequently the appearance of microvilli. This Dictyostelium discoideum (Social amoeba) protein is Protovillin (vilB).